A 254-amino-acid chain; its full sequence is RING-H2 finger protein ATL28 (254 aa).

A helical transmembrane segment spans residues 25-45 (VVLTGVLLFVIFAGFFSLFLW). An RING-type; atypical zinc finger spans residues 103–145 (CAICLSEFSDEDTVRLITVCRHPFHSNCIDLWFELHKTCPVCR).

It belongs to the RING-type zinc finger family. ATL subfamily.

Its subcellular location is the membrane. The enzyme catalyses S-ubiquitinyl-[E2 ubiquitin-conjugating enzyme]-L-cysteine + [acceptor protein]-L-lysine = [E2 ubiquitin-conjugating enzyme]-L-cysteine + N(6)-ubiquitinyl-[acceptor protein]-L-lysine.. It functions in the pathway protein modification; protein ubiquitination. The chain is RING-H2 finger protein ATL28 (ATL28) from Arabidopsis thaliana (Mouse-ear cress).